The sequence spans 141 residues: ATP synthase epsilon chain (141 aa).

This sequence belongs to the ATPase epsilon chain family. As to quaternary structure, F-type ATPases have 2 components, CF(1) - the catalytic core - and CF(0) - the membrane proton channel. CF(1) has five subunits: alpha(3), beta(3), gamma(1), delta(1), epsilon(1). CF(0) has three main subunits: a, b and c.

It is found in the cell inner membrane. Its function is as follows. Produces ATP from ADP in the presence of a proton gradient across the membrane. This chain is ATP synthase epsilon chain, found in Pseudomonas savastanoi pv. phaseolicola (strain 1448A / Race 6) (Pseudomonas syringae pv. phaseolicola (strain 1448A / Race 6)).